Consider the following 202-residue polypeptide: Large ribosomal subunit protein bL25 (202 aa).

Belongs to the bacterial ribosomal protein bL25 family. CTC subfamily. Part of the 50S ribosomal subunit; part of the 5S rRNA/L5/L18/L25 subcomplex. Contacts the 5S rRNA. Binds to the 5S rRNA independently of L5 and L18.

Functionally, this is one of the proteins that binds to the 5S RNA in the ribosome where it forms part of the central protuberance. The polypeptide is Large ribosomal subunit protein bL25 (Burkholderia ambifaria (strain MC40-6)).